Reading from the N-terminus, the 131-residue chain is MTPGEYVLADTPVVCNAGREAITLEVLNRGDRPVQVGSHFHFAEANRALDFDRERATGHRLDIPAGTAVRLEPGDSTTVRLIPLGGDRVVHGFRDLVDGPLDPAAGVTSDEDAASAVVPRGAETSEREARA.

The tract at residues 100 to 131 (PLDPAAGVTSDEDAASAVVPRGAETSEREARA) is disordered.

This sequence belongs to the urease beta subunit family. In terms of assembly, heterotrimer of UreA (gamma), UreB (beta) and UreC (alpha) subunits. Three heterotrimers associate to form the active enzyme.

It localises to the cytoplasm. The catalysed reaction is urea + 2 H2O + H(+) = hydrogencarbonate + 2 NH4(+). The protein operates within nitrogen metabolism; urea degradation; CO(2) and NH(3) from urea (urease route): step 1/1. The chain is Urease subunit beta from Kocuria rhizophila (strain ATCC 9341 / DSM 348 / NBRC 103217 / DC2201).